Reading from the N-terminus, the 309-residue chain is NAD kinase (309 aa).

The Proton acceptor role is filled by aspartate 89. Residues 89-90, 163-164, arginine 191, aspartate 193, and 204-209 contribute to the NAD(+) site; these read DG, NE, and TAYSLS.

Belongs to the NAD kinase family. A divalent metal cation serves as cofactor.

It localises to the cytoplasm. The catalysed reaction is NAD(+) + ATP = ADP + NADP(+) + H(+). In terms of biological role, involved in the regulation of the intracellular balance of NAD and NADP, and is a key enzyme in the biosynthesis of NADP. Catalyzes specifically the phosphorylation on 2'-hydroxyl of the adenosine moiety of NAD to yield NADP. This chain is NAD kinase, found in Shewanella halifaxensis (strain HAW-EB4).